Here is a 141-residue protein sequence, read N- to C-terminus: Large ribosomal subunit protein uL11 (141 aa).

Belongs to the universal ribosomal protein uL11 family. In terms of assembly, part of the ribosomal stalk of the 50S ribosomal subunit. Interacts with L10 and the large rRNA to form the base of the stalk. L10 forms an elongated spine to which L12 dimers bind in a sequential fashion forming a multimeric L10(L12)X complex. In terms of processing, one or more lysine residues are methylated.

Functionally, forms part of the ribosomal stalk which helps the ribosome interact with GTP-bound translation factors. This chain is Large ribosomal subunit protein uL11, found in Prochlorococcus marinus (strain MIT 9515).